Consider the following 147-residue polypeptide: 3-dehydroquinate dehydratase 1 (147 aa).

Catalysis depends on Y23, which acts as the Proton acceptor. Substrate-binding residues include N75, H81, and D88. H101 serves as the catalytic Proton donor. Substrate-binding positions include 102–103 and R112; that span reads LS.

The protein belongs to the type-II 3-dehydroquinase family. In terms of assembly, homododecamer.

The enzyme catalyses 3-dehydroquinate = 3-dehydroshikimate + H2O. It participates in metabolic intermediate biosynthesis; chorismate biosynthesis; chorismate from D-erythrose 4-phosphate and phosphoenolpyruvate: step 3/7. Its function is as follows. Catalyzes a trans-dehydration via an enolate intermediate. This Pseudomonas aeruginosa (strain ATCC 15692 / DSM 22644 / CIP 104116 / JCM 14847 / LMG 12228 / 1C / PRS 101 / PAO1) protein is 3-dehydroquinate dehydratase 1 (aroQ1).